The chain runs to 380 residues: Endo-polygalacturonase (380 aa).

A signal peptide spans 1-17 (MVHILSSALSLLRLGAA). A propeptide spanning residues 18–42 (VSAAPAPAPTAAPNVADALAAVEKR) is cleaved from the precursor. Residues C46 and C64 are joined by a disulfide bond. 6 PbH1 repeats span residues 178–207 (ASGL…DVGS), 208–229 (STDI…AINS), 230–250 (GTGI…SIGS), 259–280 (VSDV…RIKT), 288–310 (VSGV…VIEQ), and 322–343 (TSGV…SSSA). The active-site Proton donor is the D222. C224 and C240 are disulfide-bonded. H244 is an active-site residue. C350 and C353 are oxidised to a cystine. N-linked (GlcNAc...) asparagine glycosylation occurs at N361. An intrachain disulfide couples C371 to C380.

The protein belongs to the glycosyl hydrolase 28 family.

It is found in the secreted. The catalysed reaction is (1,4-alpha-D-galacturonosyl)n+m + H2O = (1,4-alpha-D-galacturonosyl)n + (1,4-alpha-D-galacturonosyl)m.. This is Endo-polygalacturonase (PG1) from Sclerotinia sclerotiorum (White mold).